Reading from the N-terminus, the 109-residue chain is Oncomodulin (109 aa).

Serine 2 is subject to N-acetylserine. 2 consecutive EF-hand domains span residues 39–74 (MSAS…FESG) and 78–109 (LTES…MVHS). 10 residues coordinate Ca(2+): aspartate 52, aspartate 54, serine 56, tyrosine 58, glutamate 63, aspartate 91, aspartate 93, aspartate 95, lysine 97, and glutamate 102.

It belongs to the parvalbumin family. As to expression, abundant in the organ of Corti.

Functionally, has some calmodulin-like activity with respect to enzyme activation and growth regulation. Binds two calcium ions. The polypeptide is Oncomodulin (OCM) (Cavia porcellus (Guinea pig)).